The chain runs to 461 residues: D-phenylhydantoinase (461 aa).

A divalent metal cation is bound by residues His59, His61, and Lys151. Lys151 carries the N6-carboxylysine modification. Tyr156 lines the substrate pocket. Positions 182 and 239 each coordinate a divalent metal cation. Ser286 contributes to the substrate binding site. Asp313 lines the a divalent metal cation pocket. Asn335 contributes to the substrate binding site.

It belongs to the metallo-dependent hydrolases superfamily. Hydantoinase/dihydropyrimidinase family. In terms of assembly, homotetramer. A divalent metal cation is required as a cofactor. Post-translationally, carboxylation allows a single lysine to coordinate two divalent metal cations.

It carries out the reaction D-5-phenylhydantoin + H2O = N-carbamoyl-D-phenylglycine + H(+). Functionally, catalyzes the stereospecific hydrolysis of the cyclic amide bond of D-hydantoin derivatives with an aromatic side chains at the 5'-position. Has no activity on dihydropyrimidines. The physiological function is unknown. The polypeptide is D-phenylhydantoinase (Escherichia coli O81 (strain ED1a)).